A 156-amino-acid chain; its full sequence is Ribosome maturation factor RimP (156 aa).

It belongs to the RimP family.

It localises to the cytoplasm. In terms of biological role, required for maturation of 30S ribosomal subunits. In Dictyoglomus turgidum (strain DSM 6724 / Z-1310), this protein is Ribosome maturation factor RimP.